Reading from the N-terminus, the 621-residue chain is uncharacterized protein (621 aa).

4 stretches are compositionally biased toward low complexity: residues 1 to 10, 63 to 79, 137 to 182, and 309 to 347; these read MIEDNINNNE, TEPL…TTPS, NNNN…NNFN, and NQSI…NNNN. Disordered regions lie at residues 1-29, 63-100, 135-194, 307-374, 430-471, 492-539, and 594-614; these read MIED…DKNN, TEPL…SNKT, DDNN…KDND, KTNQ…EDDT, YNNN…IAKR, KQSQ…IKII, and PTQI…SPSK. Residues 348 to 357 show a composition bias toward polar residues; it reads STLTSSNSLS. 3 stretches are compositionally biased toward low complexity: residues 431 to 459, 496 to 539, and 597 to 613; these read NNNN…NNNN, NNNN…IKII, and INSN…SSPS.

This is an uncharacterized protein from Dictyostelium discoideum (Social amoeba).